A 227-amino-acid polypeptide reads, in one-letter code: Cytochrome c oxidase subunit 2 (227 aa).

Residues M1–S14 are Mitochondrial intermembrane-facing. Residues P15–M45 traverse the membrane as a helical segment. Residues L46–Q59 are Mitochondrial matrix-facing. The chain crosses the membrane as a helical span at residues E60–M87. At D88 to I227 the chain is on the mitochondrial intermembrane side. Positions 161, 196, 198, 200, 204, and 207 each coordinate Cu cation. E198 lines the Mg(2+) pocket.

The protein belongs to the cytochrome c oxidase subunit 2 family. As to quaternary structure, component of the cytochrome c oxidase (complex IV, CIV), a multisubunit enzyme composed of 14 subunits. The complex is composed of a catalytic core of 3 subunits MT-CO1, MT-CO2 and MT-CO3, encoded in the mitochondrial DNA, and 11 supernumerary subunits COX4I, COX5A, COX5B, COX6A, COX6B, COX6C, COX7A, COX7B, COX7C, COX8 and NDUFA4, which are encoded in the nuclear genome. The complex exists as a monomer or a dimer and forms supercomplexes (SCs) in the inner mitochondrial membrane with NADH-ubiquinone oxidoreductase (complex I, CI) and ubiquinol-cytochrome c oxidoreductase (cytochrome b-c1 complex, complex III, CIII), resulting in different assemblies (supercomplex SCI(1)III(2)IV(1) and megacomplex MCI(2)III(2)IV(2)). Found in a complex with TMEM177, COA6, COX18, COX20, SCO1 and SCO2. Interacts with TMEM177 in a COX20-dependent manner. Interacts with COX20. Interacts with COX16. The cofactor is Cu cation.

It is found in the mitochondrion inner membrane. The catalysed reaction is 4 Fe(II)-[cytochrome c] + O2 + 8 H(+)(in) = 4 Fe(III)-[cytochrome c] + 2 H2O + 4 H(+)(out). Its function is as follows. Component of the cytochrome c oxidase, the last enzyme in the mitochondrial electron transport chain which drives oxidative phosphorylation. The respiratory chain contains 3 multisubunit complexes succinate dehydrogenase (complex II, CII), ubiquinol-cytochrome c oxidoreductase (cytochrome b-c1 complex, complex III, CIII) and cytochrome c oxidase (complex IV, CIV), that cooperate to transfer electrons derived from NADH and succinate to molecular oxygen, creating an electrochemical gradient over the inner membrane that drives transmembrane transport and the ATP synthase. Cytochrome c oxidase is the component of the respiratory chain that catalyzes the reduction of oxygen to water. Electrons originating from reduced cytochrome c in the intermembrane space (IMS) are transferred via the dinuclear copper A center (CU(A)) of subunit 2 and heme A of subunit 1 to the active site in subunit 1, a binuclear center (BNC) formed by heme A3 and copper B (CU(B)). The BNC reduces molecular oxygen to 2 water molecules using 4 electrons from cytochrome c in the IMS and 4 protons from the mitochondrial matrix. The polypeptide is Cytochrome c oxidase subunit 2 (MT-CO2) (Gerbillurus vallinus (Brush-tailed hairy-footed gerbil)).